Here is a 314-residue protein sequence, read N- to C-terminus: Pseudouridine-5'-phosphate glycosidase (314 aa).

The active-site Proton donor is the E30. Residues K91 and V111 each coordinate substrate. D143 lines the Mn(2+) pocket. Substrate is bound at residue 145-147; that stretch reads SAD. The active-site Nucleophile is K164.

The protein belongs to the pseudouridine-5'-phosphate glycosidase family. As to quaternary structure, homotrimer. The cofactor is Mn(2+).

It catalyses the reaction D-ribose 5-phosphate + uracil = psi-UMP + H2O. Functionally, catalyzes the reversible cleavage of pseudouridine 5'-phosphate (PsiMP) to ribose 5-phosphate and uracil. Functions biologically in the cleavage direction, as part of a pseudouridine degradation pathway. The sequence is that of Pseudouridine-5'-phosphate glycosidase from Cupriavidus pinatubonensis (strain JMP 134 / LMG 1197) (Cupriavidus necator (strain JMP 134)).